A 416-amino-acid chain; its full sequence is Queuine tRNA-ribosyltransferase accessory subunit 2 (416 aa).

4 residues coordinate Zn(2+): Cys-323, Cys-325, Cys-328, and His-354.

This sequence belongs to the queuine tRNA-ribosyltransferase family. QTRT2 subfamily. In terms of assembly, heterodimer of a catalytic subunit and an accessory subunit. The cofactor is Zn(2+).

It localises to the cytoplasm. Its function is as follows. Non-catalytic subunit of the queuine tRNA-ribosyltransferase (TGT) that catalyzes the base-exchange of a guanine (G) residue with queuine (Q) at position 34 (anticodon wobble position) in tRNAs with GU(N) anticodons (tRNA-Asp, -Asn, -His and -Tyr), resulting in the hypermodified nucleoside queuosine (7-(((4,5-cis-dihydroxy-2-cyclopenten-1-yl)amino)methyl)-7-deazaguanosine). The chain is Queuine tRNA-ribosyltransferase accessory subunit 2 from Drosophila mojavensis (Fruit fly).